The sequence spans 363 residues: Protein-arginine kinase (363 aa).

Positions 24–254 (IVLSSRIRLA…AQLIEQERSA (231 aa)) constitute a Phosphagen kinase C-terminal domain. ATP-binding positions include 27 to 31 (SSRIR), histidine 92, arginine 125, 176 to 180 (RASVM), and 207 to 212 (RGIYGE). An RDXXRA motif of the pArg binding pocket involved in allosteric regulation motif is present at residues 337–342 (RDIKRA).

The protein belongs to the ATP:guanido phosphotransferase family.

The catalysed reaction is L-arginyl-[protein] + ATP = N(omega)-phospho-L-arginyl-[protein] + ADP + H(+). Its activity is regulated as follows. Appears to be allosterically activated by the binding of pArg-containing polypeptides to the pArg-binding pocket localized in the C-terminal domain of McsB. In terms of biological role, catalyzes the specific phosphorylation of arginine residues in a large number of proteins. Is part of the bacterial stress response system. Protein arginine phosphorylation has a physiologically important role and is involved in the regulation of many critical cellular processes, such as protein homeostasis, motility, competence, and stringent and stress responses, by regulating gene expression and protein activity. The chain is Protein-arginine kinase from Bacillus pumilus (strain SAFR-032).